The primary structure comprises 208 residues: Large ribosomal subunit protein uL3 (208 aa).

Gln-149 carries the post-translational modification N5-methylglutamine.

Belongs to the universal ribosomal protein uL3 family. Part of the 50S ribosomal subunit. Forms a cluster with proteins L14 and L19. In terms of processing, methylated by PrmB.

One of the primary rRNA binding proteins, it binds directly near the 3'-end of the 23S rRNA, where it nucleates assembly of the 50S subunit. The protein is Large ribosomal subunit protein uL3 of Mannheimia succiniciproducens (strain KCTC 0769BP / MBEL55E).